A 189-amino-acid chain; its full sequence is Threonylcarbamoyl-AMP synthase (189 aa).

A YrdC-like domain is found at 7–189 (NFTVKGLTEQ…DAITGKIIRK (183 aa)).

The protein belongs to the SUA5 family. TsaC subfamily.

It localises to the cytoplasm. It catalyses the reaction L-threonine + hydrogencarbonate + ATP = L-threonylcarbamoyladenylate + diphosphate + H2O. Its function is as follows. Required for the formation of a threonylcarbamoyl group on adenosine at position 37 (t(6)A37) in tRNAs that read codons beginning with adenine. Catalyzes the conversion of L-threonine, HCO(3)(-)/CO(2) and ATP to give threonylcarbamoyl-AMP (TC-AMP) as the acyladenylate intermediate, with the release of diphosphate. The chain is Threonylcarbamoyl-AMP synthase from Blochmanniella floridana.